Here is a 1038-residue protein sequence, read N- to C-terminus: Bone morphogenetic protein receptor type-2 (1038 aa).

The first 26 residues, 1 to 26 (MTSSLHRPFRVPWLLWAVLLVSTTAA), serve as a signal peptide directing secretion. The Extracellular portion of the chain corresponds to 27–150 (SQNQERLCAF…PPHSFNRDET (124 aa)). Cystine bridges form between cysteine 34–cysteine 66, cysteine 60–cysteine 84, cysteine 94–cysteine 117, cysteine 99–cysteine 116, and cysteine 118–cysteine 123. A glycan (N-linked (GlcNAc...) asparagine) is linked at asparagine 55. Residue asparagine 110 is glycosylated (N-linked (GlcNAc...) asparagine). The N-linked (GlcNAc...) asparagine glycan is linked to asparagine 126. A helical membrane pass occupies residues 151 to 171 (IIIALASVSVLAVLIVALCFG). The Cytoplasmic portion of the chain corresponds to 172 to 1038 (YRMLTGDRKQ…VSKDIGMNCL (867 aa)). The region spanning 203 to 504 (LKLLELIGRG…QCAEERMAEL (302 aa)) is the Protein kinase domain. ATP is bound by residues 209-217 (IGRGRYGAV), lysine 230, and 280-282 (EYY). Aspartate 333 acts as the Proton acceptor in catalysis. Residues 337–338 (RN) and aspartate 351 contribute to the ATP site. Threonine 379 bears the Phosphothreonine mark. Serine 586 carries the post-translational modification Phosphoserine. Residues 593–626 (QAQARIPSPETSVTSLSTNTTTTNTTGLTPSTGM) form a disordered region. Low complexity predominate over residues 603 to 626 (TSVTSLSTNTTTTNTTGLTPSTGM). A phosphoserine mark is found at serine 680 and serine 681. Residues 746–769 (PKQQNLPKRPTSLPLNTKNSTKEP) are disordered. The residue at position 843 (serine 843) is a Phosphoserine. Over residues 872-896 (RREQQAGHDEGVLDRLVDRRERPLE) the composition is skewed to basic and acidic residues. The disordered stretch occupies residues 872–974 (RREQQAGHDE…SGSGEKIKRR (103 aa)). Composition is skewed to polar residues over residues 909-924 (PCSE…TSTA) and 937-964 (RPNS…QDGK).

The protein belongs to the protein kinase superfamily. TKL Ser/Thr protein kinase family. TGFB receptor subfamily. In terms of assembly, interacts with GDF5. Interacts with BMP4. Interacts with SCUBE3. Interacts with TSC22D1/TSC-22. Interacts with activin A/INHBA. It depends on Mg(2+) as a cofactor. Mn(2+) is required as a cofactor.

It is found in the cell membrane. The catalysed reaction is L-threonyl-[receptor-protein] + ATP = O-phospho-L-threonyl-[receptor-protein] + ADP + H(+). It catalyses the reaction L-seryl-[receptor-protein] + ATP = O-phospho-L-seryl-[receptor-protein] + ADP + H(+). Functionally, on ligand binding, forms a receptor complex consisting of two type II and two type I transmembrane serine/threonine kinases. Type II receptors phosphorylate and activate type I receptors which autophosphorylate, then bind and activate SMAD transcriptional regulators. Can also mediate signaling through the activation of the p38MAPK cascade. Binds to BMP7, BMP2 and, less efficiently, BMP4. Binding is weak but enhanced by the presence of type I receptors for BMPs. Mediates induction of adipogenesis by GDF6. Promotes signaling also by binding to activin A/INHBA. This chain is Bone morphogenetic protein receptor type-2 (Bmpr2), found in Mus musculus (Mouse).